Reading from the N-terminus, the 444-residue chain is N-succinylarginine dihydrolase (444 aa).

Substrate contacts are provided by residues A19–S28, N110, and H137–R138. E174 is an active-site residue. R214 serves as a coordination point for substrate. H250 is an active-site residue. Positions 252 and 362 each coordinate substrate. Residue C368 is the Nucleophile of the active site.

It belongs to the succinylarginine dihydrolase family. Homodimer.

It catalyses the reaction N(2)-succinyl-L-arginine + 2 H2O + 2 H(+) = N(2)-succinyl-L-ornithine + 2 NH4(+) + CO2. The protein operates within amino-acid degradation; L-arginine degradation via AST pathway; L-glutamate and succinate from L-arginine: step 2/5. In terms of biological role, catalyzes the hydrolysis of N(2)-succinylarginine into N(2)-succinylornithine, ammonia and CO(2). The chain is N-succinylarginine dihydrolase from Shewanella oneidensis (strain ATCC 700550 / JCM 31522 / CIP 106686 / LMG 19005 / NCIMB 14063 / MR-1).